The chain runs to 425 residues: MIDIKRLRQDFDAIQEKLAHRGEDLTDMNRFIALDEKRRELIAKTEVLKAERNEATKKIAELKRNKENADEAIAAMRQVGDEVKALDEELREVEATLNLLLLGIPNIPHDSVPIGSTEDDNVVIREVGDKPAFDFEAVPHWDLMEQLKIVDVERAGKVTGSRFVFYRGAGARLERALINFMMDLHQDKNGYTEILPPLMVNRDSMTGTGQLPKFEEDAFKVEDTNYFLVPTAEVPVTNMHRDEILSADQLPIGYAAYSQCFRSEAGSAGRDTRGLIRQHQFNKVELVRFVKPEESYEQLELLTGQAEEVLKLLKLPYQVLSMCTADLGFTAAKKYDIEVWMPSQGVYREISSCSNFEDFQARRAQIRFRREANAKPEFVHTLNGSALAVGRTVAAILENYQQADGSVVIPEVLRPYMGGLEVIQG.

Residue 231–233 (TAE) coordinates L-serine. 262-264 (RSE) serves as a coordination point for ATP. Residue Glu285 participates in L-serine binding. 349–352 (EISS) serves as a coordination point for ATP. Ser385 is a binding site for L-serine.

Belongs to the class-II aminoacyl-tRNA synthetase family. Type-1 seryl-tRNA synthetase subfamily. In terms of assembly, homodimer. The tRNA molecule binds across the dimer.

It is found in the cytoplasm. The catalysed reaction is tRNA(Ser) + L-serine + ATP = L-seryl-tRNA(Ser) + AMP + diphosphate + H(+). It carries out the reaction tRNA(Sec) + L-serine + ATP = L-seryl-tRNA(Sec) + AMP + diphosphate + H(+). It functions in the pathway aminoacyl-tRNA biosynthesis; selenocysteinyl-tRNA(Sec) biosynthesis; L-seryl-tRNA(Sec) from L-serine and tRNA(Sec): step 1/1. Functionally, catalyzes the attachment of serine to tRNA(Ser). Is also able to aminoacylate tRNA(Sec) with serine, to form the misacylated tRNA L-seryl-tRNA(Sec), which will be further converted into selenocysteinyl-tRNA(Sec). This is Serine--tRNA ligase from Exiguobacterium sibiricum (strain DSM 17290 / CCUG 55495 / CIP 109462 / JCM 13490 / 255-15).